A 318-amino-acid chain; its full sequence is Aspartate carbamoyltransferase catalytic subunit (318 aa).

Arg59 and Thr60 together coordinate carbamoyl phosphate. Lys87 contributes to the L-aspartate binding site. 3 residues coordinate carbamoyl phosphate: Arg109, His137, and Gln140. 2 residues coordinate L-aspartate: Arg170 and Arg224. Residues Gly265 and Pro266 each contribute to the carbamoyl phosphate site.

Belongs to the aspartate/ornithine carbamoyltransferase superfamily. ATCase family. Heterododecamer (2C3:3R2) of six catalytic PyrB chains organized as two trimers (C3), and six regulatory PyrI chains organized as three dimers (R2).

The enzyme catalyses carbamoyl phosphate + L-aspartate = N-carbamoyl-L-aspartate + phosphate + H(+). It participates in pyrimidine metabolism; UMP biosynthesis via de novo pathway; (S)-dihydroorotate from bicarbonate: step 2/3. Its function is as follows. Catalyzes the condensation of carbamoyl phosphate and aspartate to form carbamoyl aspartate and inorganic phosphate, the committed step in the de novo pyrimidine nucleotide biosynthesis pathway. This chain is Aspartate carbamoyltransferase catalytic subunit, found in Rhizobium johnstonii (strain DSM 114642 / LMG 32736 / 3841) (Rhizobium leguminosarum bv. viciae).